The chain runs to 303 residues: Nucleotide-binding protein Acry_0446 (303 aa).

10–17 provides a ligand contact to ATP; that stretch reads GLSGAGRN. GTP is bound at residue 54 to 57; it reads DART.

This sequence belongs to the RapZ-like family.

Displays ATPase and GTPase activities. This Acidiphilium cryptum (strain JF-5) protein is Nucleotide-binding protein Acry_0446.